The following is a 324-amino-acid chain: Glyoxylate/hydroxypyruvate reductase B (324 aa).

Residues Arg237 and Glu266 contribute to the active site. The active-site Proton donor is His285.

This sequence belongs to the D-isomer specific 2-hydroxyacid dehydrogenase family. GhrB subfamily. In terms of assembly, homodimer.

It is found in the cytoplasm. It catalyses the reaction glycolate + NADP(+) = glyoxylate + NADPH + H(+). It carries out the reaction (R)-glycerate + NAD(+) = 3-hydroxypyruvate + NADH + H(+). The catalysed reaction is (R)-glycerate + NADP(+) = 3-hydroxypyruvate + NADPH + H(+). Catalyzes the NADPH-dependent reduction of glyoxylate and hydroxypyruvate into glycolate and glycerate, respectively. The chain is Glyoxylate/hydroxypyruvate reductase B from Shigella flexneri.